We begin with the raw amino-acid sequence, 357 residues long: Putative F-box/kelch-repeat protein At5g38680 (357 aa).

One can recognise an F-box domain in the interval 14–61; the sequence is NSNPSLPDALIISCIARVSRLYYPILSFVSKSFRSLLASPELYKERSL. Kelch repeat units follow at residues 131-175, 177-224, 226-267, and 268-313; these read NIYN…VLDG, IYVA…SKSL, IDEK…YCEI, and ENVL…GGKK.

The protein is Putative F-box/kelch-repeat protein At5g38680 of Arabidopsis thaliana (Mouse-ear cress).